A 560-amino-acid chain; its full sequence is Chaperonin GroEL 2 (560 aa).

Residues Thr-29–Pro-32, Asp-86–Thr-90, Gly-413, Asn-478–Ala-480, and Asp-494 each bind ATP.

It belongs to the chaperonin (HSP60) family. Forms a cylinder of 14 subunits composed of two heptameric rings stacked back-to-back. Interacts with the co-chaperonin GroES.

It is found in the cytoplasm. It catalyses the reaction ATP + H2O + a folded polypeptide = ADP + phosphate + an unfolded polypeptide.. In terms of biological role, together with its co-chaperonin GroES, plays an essential role in assisting protein folding. The GroEL-GroES system forms a nano-cage that allows encapsulation of the non-native substrate proteins and provides a physical environment optimized to promote and accelerate protein folding. This Nostoc sp. (strain PCC 7120 / SAG 25.82 / UTEX 2576) protein is Chaperonin GroEL 2.